We begin with the raw amino-acid sequence, 107 residues long: U1-lycotoxin-Ls1b (107 aa).

The first 20 residues, 1-20 (MMKVLVVIALLVTLISYSSS), serve as a signal peptide directing secretion. Positions 21 to 41 (EGIDDLEADELLSLMANEQTR) are excised as a propeptide. 4 disulfide bridges follow: Cys-44–Cys-59, Cys-51–Cys-68, Cys-58–Cys-86, and Cys-70–Cys-84.

This sequence belongs to the neurotoxin 19 (CSTX) family. 04 (U1-Lctx) subfamily. As to expression, expressed by the venom gland.

It localises to the secreted. The chain is U1-lycotoxin-Ls1b from Lycosa singoriensis (Wolf spider).